Reading from the N-terminus, the 255-residue chain is Ciliogenesis and planar polarity effector 2 (255 aa).

A small GTPase-like region spans residues 52–255 (PADIASYKLF…VIAGLVGGAD (204 aa)). GTP is bound by residues 64–71 (GRSGAGKT) and 177–180 (TKLD).

It belongs to the small GTPase superfamily. Rab family.

The protein localises to the cytoplasm. It is found in the cytoskeleton. The protein resides in the cilium basal body. Its function is as follows. Potential effector of the planar cell polarity signaling pathway. Plays a role in targeted membrane trafficking most probably at the level of vesicle fusion with membranes. Involved in cilium biogenesis by regulating the transport of cargo proteins to the basal body and to the apical tips of cilia. More generally involved in exocytosis in secretory cells. The chain is Ciliogenesis and planar polarity effector 2 (cplane2) from Xenopus tropicalis (Western clawed frog).